The primary structure comprises 622 residues: Cytochrome c oxidase subunit 1 (622 aa).

At 1–27 (MLNALTEKRTRGSMLWDYLTTVDHKKI) the chain is on the extracellular side. Residues 28–46 (AILYLVAGGFFFLVGGIEA) form a helical membrane-spanning segment. The Cytoplasmic segment spans residues 47–68 (MFIRIQLAKPENAFLSAQAYNE). A helical transmembrane segment spans residues 69 to 88 (VMTMHGTTMIFLAAMPLLFA). His-73 contributes to the Fe(II)-heme a binding site. Topologically, residues 89 to 110 (LMNAVVPLQIGARDVSFPFLNA) are extracellular. Residues 111 to 128 (LGFWLFFFGGIFLNLSWF) form a helical membrane-spanning segment. Over 129 to 159 (LGGAPDAGWTSYASLSLHSKGHGIDFFVLGL) the chain is Cytoplasmic. Residues 160–178 (QISGLGTLIAGINFLATII) traverse the membrane as a helical segment. The Extracellular segment spans residues 179–196 (NMRAPGMTYMRLPLFTWT). Residues 197-215 (TFVASALILFAFPPLTVGL) form a helical membrane-spanning segment. Residues 216 to 241 (ALMMLDRLFGTNFFNPELGGNTVIWE) are Cytoplasmic-facing. Residues 242–261 (HLFWIFGHPEVYILILPAFG) form a helical membrane-spanning segment. Cu cation-binding residues include His-249 and Tyr-253. A cross-link (1'-histidyl-3'-tyrosine (His-Tyr)) is located at residues 249-253 (HPEVY). Topologically, residues 262–284 (IFSEVIPVFARKRLFGYSSMVFA) are extracellular. A helical transmembrane segment spans residues 285-304 (IVLIGFLGFMVWVHHMFTTG). Residues His-298 and His-299 each coordinate Cu cation. Topologically, residues 305–312 (LGPIANAI) are cytoplasmic. A helical membrane pass occupies residues 313–331 (FAVATMAIAIPTGIKIFNW). Over 332-346 (LLTIWGGNVKYTTAM) the chain is Extracellular. A helical transmembrane segment spans residues 347–366 (LYAVSFIPSFVLGGVTGVML). Residues 367 to 374 (AAAAADYQ) are Cytoplasmic-facing. Residues 375 to 394 (FHDTYFVVAHFHYVIIGGVV) traverse the membrane as a helical segment. His-384 lines the heme a3 pocket. His-386 is a Fe(II)-heme a binding site. Residues 395 to 421 (FGLLAGVHFWWPKMFGKILHETMGKIS) are Extracellular-facing. The helical transmembrane segment at 422–441 (FVLFFIGFHLTFFIQHFVGL) threads the bilayer. The Cytoplasmic portion of the chain corresponds to 442-459 (MGMPRRVYTFLPGQGLET). Residues 460–479 (GNLISTIGAFFMAAAVILLL) form a helical membrane-spanning segment. The Extracellular segment spans residues 480–552 (VNVIWTSVKG…EPVDDIHMPN (73 aa)). Residues 553–572 (GSILPLIISFGLFVAAFGLL) traverse the membrane as a helical segment. Topologically, residues 573 to 580 (YRSDYAWG) are cytoplasmic. A helical transmembrane segment spans residues 581–604 (LPVIFIGLGITFITMLLRSVIDDH). Residues 605–622 (GYHIHKEELPNDDKGVKA) lie on the Cytoplasmic side of the membrane.

Belongs to the heme-copper respiratory oxidase family. Cu(2+) serves as cofactor. Requires heme as cofactor.

Its subcellular location is the cell membrane. The catalysed reaction is 4 Fe(II)-[cytochrome c] + O2 + 8 H(+)(in) = 4 Fe(III)-[cytochrome c] + 2 H2O + 4 H(+)(out). It participates in energy metabolism; oxidative phosphorylation. In terms of biological role, cytochrome c oxidase is the component of the respiratory chain that catalyzes the reduction of oxygen to water. Subunits 1-3 form the functional core of the enzyme complex. Co I is the catalytic subunit of the enzyme. Electrons originating in cytochrome c are transferred via the copper A center of subunit 2 and heme a of subunit 1 to the bimetallic center formed by heme a3 and copper B. This cytochrome c oxidase shows proton pump activity across the membrane in addition to the electron transfer. This chain is Cytochrome c oxidase subunit 1 (ctaD), found in Bacillus subtilis (strain 168).